An 80-amino-acid polypeptide reads, in one-letter code: Serine palmitoyltransferase small subunit A-B (80 aa).

At 1-21 the chain is on the cytoplasmic side; sequence MKVSCEDVNGPRSSLGRAWNH. A helical transmembrane segment spans residues 22 to 38; it reads VSWLYYQYLLVTALYML. The Lumenal portion of the chain corresponds to 39 to 43; the sequence is EPWER. The helical transmembrane segment at 44-66 threads the bilayer; that stretch reads TVFNSMLVSIVGMALYTGYIFMP. At 67-80 the chain is on the cytoplasmic side; sequence QHILAILHYFEIVQ.

Belongs to the SPTSS family. SPTSSA subfamily. As to quaternary structure, component of the serine palmitoyltransferase (SPT) complex, which is composed of SPTLC1, SPTLC2 or SPTLC3 and SPTSSA or SPTSSB. The heterodimer consisting of SPTLC1 and SPTLC2/SPTLC3 forms the catalytic core of the enzyme, while SPTSSA or SPTSSB subunits determine substrate specificity. SPT also interacts with ORMDL proteins, especially ORMDL3, which negatively regulate SPT activity in the presence of ceramides.

The protein localises to the endoplasmic reticulum membrane. The protein operates within lipid metabolism; sphingolipid metabolism. In terms of biological role, component of the serine palmitoyltransferase multisubunit enzyme (SPT) that catalyzes the initial and rate-limiting step in sphingolipid biosynthesis by condensing L-serine and activated acyl-CoA (most commonly palmitoyl-CoA) to form long-chain bases. The SPT complex is composed of SPTLC1, SPTLC2 or SPTLC3 and SPTSSA or SPTSSB. Within this complex, the heterodimer consisting of SPTLC1 and SPTLC2/SPTLC3 forms the catalytic core. Within the SPT complex, SPTSSA stimulates the catalytic activity and plays a role in substrate specificity, which depends upon the overall complex composition. The SPTLC1-SPTLC2-SPTSSA complex shows a strong preference for C16-CoA substrate, while the SPTLC1-SPTLC3-SPTSSA isozyme uses both C14-CoA and C16-CoA as substrates, with a slight preference for C14-CoA. Independently of its action as a SPT component, may be involved in MBOAT7 localization to mitochondria-associated membranes, a membrane bridge between the endoplasmic reticulum and mitochondria, may hence affect MBOAT7-catalyzed incorporation of arachidonic acid into phosphatidylinositol. This chain is Serine palmitoyltransferase small subunit A-B (sptssa-b), found in Xenopus laevis (African clawed frog).